Reading from the N-terminus, the 406-residue chain is Arginine deiminase (406 aa).

Cys396 (amidino-cysteine intermediate) is an active-site residue.

Belongs to the arginine deiminase family.

The protein localises to the cytoplasm. The enzyme catalyses L-arginine + H2O = L-citrulline + NH4(+). Its pathway is amino-acid degradation; L-arginine degradation via ADI pathway; carbamoyl phosphate from L-arginine: step 1/2. In Aliivibrio fischeri (strain MJ11) (Vibrio fischeri), this protein is Arginine deiminase.